A 258-amino-acid polypeptide reads, in one-letter code: uncharacterized protein (258 aa).

A compositionally biased stretch (polar residues) spans 40–54 (AQKTDTPLDSSSYAV). The tract at residues 40–63 (AQKTDTPLDSSSYAVTSPEEAPNE) is disordered.

This is an uncharacterized protein from Treponema pallidum (strain Nichols).